The primary structure comprises 1099 residues: Solute carrier family 12 member 1 (1099 aa).

Over 1-177 (MSLNNSSSVF…EDNKAGAVKF (177 aa)) the chain is Cytoplasmic. The RFXV motif motif lies at 20 to 23 (RFQV). Phosphoserine occurs at positions 60 and 90. Phosphothreonine is present on residues T94, T99, T104, and T117. S119 bears the Phosphoserine mark. At S129 the chain carries Phosphoserine; by AMPK. S147 is modified (phosphoserine). Residues 147 to 169 (SADRVANGEGMPGEEHAENKEED) are disordered. The span at 159–169 (GEEHAENKEED) shows a compositional bias: basic and acidic residues. The chain crosses the membrane as a helical span at residues 178-198 (GWVKGVLVRCMLNIWGVMLFI). Topologically, residues 199–201 (RLS) are extracellular. A helical membrane pass occupies residues 202 to 222 (WIVGEAGIGLGVVIILLSTMV). At 223 to 259 (TSITGLSTSAIATNGFVRGGGAYYLISRSLGPEFGGS) the chain is on the cytoplasmic side. Residues 260 to 280 (IGLIFAFANAVAVAMYVVGFA) traverse the membrane as a helical segment. Residues 281 to 302 (ETVVDLLKESDSMMVDPTNDIR) are Extracellular-facing. The helical transmembrane segment at 303 to 323 (IIGSITVVILLGISVAGMEWE) threads the bilayer. The Cytoplasmic portion of the chain corresponds to 324–327 (AKAQ). The helical transmembrane segment at 328–348 (VILLIILLIAIANFFIGTVIP) threads the bilayer. Over 349–379 (SNNEKKSRGFFNYQASIFAENFGPSFTKGEG) the chain is Extracellular. A helical membrane pass occupies residues 380–400 (FFSVFAIFFPAATGILAGANI). Residues 401–417 (SGDLEDPQDAIPRGTML) are Cytoplasmic-facing. A helical transmembrane segment spans residues 418–438 (AIFITTVAYIGVAICVGACVV). Over 439–550 (RDATGSMNDT…NNEPLRGYIL (112 aa)) the chain is Extracellular. N446 and N456 each carry an N-linked (GlcNAc...) asparagine glycan. The next 2 membrane-spanning stretches (helical) occupy residues 551-571 (TFVI…APII) and 572-592 (SNFF…ASYA). The Extracellular segment spans residues 593 to 609 (KSPGWRPAYGIYNMWVS). The helical transmembrane segment at 610–630 (LFGAVLCCAVMFVINWWAAVI) threads the bilayer. Topologically, residues 631 to 1099 (TYVIEFFLYI…NHKNVLTFYS (469 aa)) are cytoplasmic.

The protein belongs to the SLC12A transporter family. As to quaternary structure, when phosphorylated, interacts with PPP3CB. Phosphorylated at Ser-90, Thr-99 and Thr-104 by OXSR1/OSR1 and STK39/SPAK downstream of WNK kinases (WNK1, WNK2, WNK3 or WNK4), promoting its activity. As to expression, predominant in kidney. The 3 isoforms are differentially distributed within the kidney: B almost exclusively in cortex, F almost exclusively in medulla, and A about equally distributed.

The protein resides in the apical cell membrane. It catalyses the reaction K(+)(out) + 2 chloride(out) + Na(+)(out) = K(+)(in) + 2 chloride(in) + Na(+)(in). Its activity is regulated as follows. Activated following phosphorylation by OXSR1/OSR1 and STK39/SPAK downstream of WNK kinases (WNK1, WNK2, WNK3 or WNK4). Functionally, renal sodium, potassium and chloride ion cotransporter that mediates the transepithelial NaCl reabsorption in the thick ascending limb and plays an essential role in the urinary concentration and volume regulation. Electrically silent transporter system. The sequence is that of Solute carrier family 12 member 1 (SLC12A1) from Oryctolagus cuniculus (Rabbit).